The sequence spans 917 residues: Auxin response factor 17 (917 aa).

Positions 134 to 236 (FCKTLTASDT…QLLLGIRRAN (103 aa)) form a DNA-binding region, TF-B3. The segment at 571-649 (SVPNALSPFS…RPTAVPVPDP (79 aa)) is disordered. Composition is skewed to low complexity over residues 576–594 (LSPF…MTLQ) and 604–620 (SYPD…NTST). The 85-residue stretch at 786 to 870 (ATFVKVYKSG…SCIKILSPQE (85 aa)) folds into the PB1 domain.

Belongs to the ARF family. In terms of assembly, homodimers and heterodimers.

It is found in the nucleus. Functionally, auxin response factors (ARFs) are transcriptional factors that bind specifically to the DNA sequence 5'-TGTCTC-3' found in the auxin-responsive promoter elements (AuxREs). The sequence is that of Auxin response factor 17 (ARF17) from Oryza sativa subsp. indica (Rice).